Reading from the N-terminus, the 147-residue chain is Hemoglobin subunit epsilon (147 aa).

In terms of domain architecture, Globin spans 3 to 147 (HFTPEEKCII…VAIALAHKYH (145 aa)). The residue at position 51 (Ser51) is a Phosphoserine. Residues His64 and His93 each coordinate heme b.

This sequence belongs to the globin family. In terms of tissue distribution, red blood cells.

Functionally, hemoglobin epsilon chain is a beta-type chain found in early embryos. This chain is Hemoglobin subunit epsilon (HBE1), found in Oryctolagus cuniculus (Rabbit).